The primary structure comprises 131 residues: Cystatin-like cysteine protease inhibitor EPIC3 (131 aa).

The N-terminal stretch at 1–22 (MAFTRSIALFAGLALAASSAQG) is a signal peptide. Residue Asn-33 is glycosylated (N-linked (GlcNAc...) asparagine). Positions 71–75 (QTVAG) match the Secondary area of contact motif.

It belongs to the cystatin family.

It is found in the secreted. Functionally, secreted effector that interacts with and inhibits host apoplastic pathogenesis-related papain-like cysteine proteases. Inhibition of host proteases by a pathogen extracellular protease inhibitor forms a specific type of defense-counterdefense mechanism between plants and microbial pathogens. The chain is Cystatin-like cysteine protease inhibitor EPIC3 from Phytophthora infestans (strain T30-4) (Potato late blight agent).